A 531-amino-acid chain; its full sequence is Zinc finger CCCH-type with G patch domain-containing protein (531 aa).

Methionine 1 is modified (N-acetylmethionine). Residues 91–133 (EAPAAARGSGSETVPKAEAGPESAAGGQEEEEGEDEEELSGTK) are disordered. Low complexity predominate over residues 107–117 (AEAGPESAAGG). The span at 118–129 (QEEEEGEDEEEL) shows a compositional bias: acidic residues. The segment at 175–201 (KSLKPCPFFLEGKCRFKENCRFSHGQV) adopts a C3H1-type zinc-finger fold. Residues 267–289 (PPLRTEATESDSDSDGTGDSSYA) form a disordered region. A G-patch domain is found at 333-379 (TRGIGSRLLTKMGYEFGKGLGRHAEGRVEPIHAVVLPRGKSLDQCVE). At serine 373 the chain carries Phosphoserine. Disordered stretches follow at residues 385 to 409 (TRVGKAGTNKPPRCRGRGARPGGRP), 426 to 446 (APGALEAGAAPAGRRSKDMYH), and 509 to 531 (RAQEAGLQQEQRKADTHKKMTEF). Low complexity predominate over residues 426-438 (APGALEAGAAPAG). Basic and acidic residues predominate over residues 518–531 (EQRKADTHKKMTEF).

As to quaternary structure, interacts with CHD4/Mi-2; the interaction is direct. Ubiquitinated in case of infection by HIV-1, leading to its degradation. Ubiquitination is mediated by the CUL4A-RBX1-DDB1-DCAF1/VPRBP complex that is hijacked by HIV-1 via interaction between HIV-1 Vpr and DCAF1/VPRBP. As to expression, widely expressed.

The protein localises to the nucleus. In terms of biological role, transcription repressor that specifically binds the 5'-GGAG[GA]A[GA]A-3' consensus sequence. Represses transcription by recruiting the chromatin multiprotein complex NuRD to target promoters. Negatively regulates expression of EGFR, a gene involved in cell proliferation, survival and migration. Its ability to repress genes of the EGFR pathway suggest it may act as a tumor suppressor. Able to suppress breast carcinogenesis. Antagonizes the transcription repression by isoform 1 by competing for the binding of the NuRD complex. Does not bind DNA. This is Zinc finger CCCH-type with G patch domain-containing protein (ZGPAT) from Homo sapiens (Human).